The chain runs to 80 residues: Cytochrome c oxidase subunit 7A1, mitochondrial (80 aa).

The transit peptide at 1 to 21 (MRALRVSQALVRSFSSTARNR) directs the protein to the mitochondrion. Residues 22 to 46 (LENRVAEKQKIFQADNDLPVHLKGG) are Mitochondrial matrix-facing. Residues 47-75 (ATDNILYRVTMTLCLGGTVYSLYCLGWAS) traverse the membrane as a helical segment. At 76–80 (FPHKK) the chain is on the mitochondrial intermembrane side.

The protein belongs to the cytochrome c oxidase VIIa family. In terms of assembly, component of the complex IV (CIV, cytochrome c oxidase), a multisubunit enzyme composed of 14 subunits. The complex is composed of a catalytic core of 3 subunits MT-CO1, MT-CO2 and MT-CO3, encoded in the mitochondrial DNA, and 11 supernumerary subunits COX4I1 (or COX4I2), COX5A, COX5B, COX6A2 (or COX6A1), COX6B1 (or COX6B2), COX6C, COX7A1 (or COX7A2), COX7B, COX7C, COX8B and NDUFA4, which are encoded in the nuclear genome. The complex exists as a monomer or a dimer and forms supercomplexes (SCs) in the inner mitochondrial membrane with NADH-ubiquinone oxidoreductase (complex I, CI) and ubiquinol-cytochrome c oxidoreductase (cytochrome b-c1 complex, complex III, CIII), resulting in different assemblies (supercomplex SCI(1)III(2)IV(1) and megacomplex MCI(2)III(2)IV(2)).

It is found in the mitochondrion inner membrane. The protein operates within energy metabolism; oxidative phosphorylation. Functionally, component of the mitochondrial respiratory complex IV (CIV, also named cytochrome c oxidase complex), the last enzyme in the mitochondrial electron transport chain which drives oxidative phosphorylation. The CIV complex is the component of the respiratory chain that catalyzes the reduction of oxygen to water. Acts as an assembly factor that specifically drives the homodimerization of CIV complexes, mediating the formation of mitochondrial respiratory supercomplexes (respirasomes) containing two CIV: supercomplxes with two molecules of CIV show improved activity. Despite being highly expressed in brown adipose tissue, not required for thermogenesis. The chain is Cytochrome c oxidase subunit 7A1, mitochondrial (COX7A1) from Sus scrofa (Pig).